A 49-amino-acid polypeptide reads, in one-letter code: Large ribosomal subunit protein bL33B (49 aa).

This sequence belongs to the bacterial ribosomal protein bL33 family.

This is Large ribosomal subunit protein bL33B from Shouchella clausii (strain KSM-K16) (Alkalihalobacillus clausii).